The following is a 477-amino-acid chain: POC1 centriolar protein homolog B (477 aa).

WD repeat units lie at residues 16 to 55 (GHKA…RAYR), 58 to 97 (GHKD…KSSE), 100 to 139 (AHTA…FLYS), 142 to 181 (RHTH…CVNN), 183 to 223 (SDSV…LLQH), 226 to 265 (VHSC…LIYT), and 268 to 307 (GHTG…VHYR). The stretch at 449-469 (EQRLSLTEDKLKDCLENQQKL) forms a coiled coil.

This sequence belongs to the WD repeat POC1 family. In terms of assembly, interacts with POC1A. Interacts with FAM161A. Interacts with CEP44; the interaction is direct and recruits POC1B to centriolar microtubules. Forms a microtubule-associated complex with POC5, CETN2 and FAM161A. Interacts with CCDC15. Phosphorylated in mitotic cells that may be mediated by CDK1.

It is found in the cytoplasm. The protein resides in the cytoskeleton. Its subcellular location is the microtubule organizing center. The protein localises to the centrosome. It localises to the centriole. It is found in the cilium basal body. The protein resides in the spindle pole. Plays an important role in centriole assembly and/or stability and ciliogenesis. Involved in early steps of centriole duplication, as well as in the later steps of centriole length control. Acts in concert with POC1A to ensure centriole integrity and proper mitotic spindle formation. Required for primary cilia formation, ciliary length and also cell proliferation. Required for retinal integrity. Acts as a positive regulator of centriole elongation. The chain is POC1 centriolar protein homolog B (Poc1b) from Rattus norvegicus (Rat).